The following is a 513-amino-acid chain: uncharacterized protein (513 aa).

This sequence belongs to the NodU/CmcH family.

This is an uncharacterized protein from Methanocaldococcus jannaschii (strain ATCC 43067 / DSM 2661 / JAL-1 / JCM 10045 / NBRC 100440) (Methanococcus jannaschii).